We begin with the raw amino-acid sequence, 77 residues long: U8-lycotoxin-Ls1h (77 aa).

An N-terminal signal peptide occupies residues 1-20 (MKLIIFTGLVLFAIVSLIEV). The propeptide occupies 21–26 (QADNER).

Belongs to the neurotoxin 19 (CSTX) family. 08 (U8-Lctx) subfamily. Contains 4 disulfide bonds. As to expression, expressed by the venom gland.

The protein localises to the secreted. The protein is U8-lycotoxin-Ls1h of Lycosa singoriensis (Wolf spider).